A 610-amino-acid chain; its full sequence is Probable galacturonosyltransferase 5 (610 aa).

Topologically, residues 1–6 are cytoplasmic; that stretch reads MNQVRR. The helical; Signal-anchor for type II membrane protein transmembrane segment at 7–27 threads the bilayer; the sequence is WQRILILSLLLLSVLAPIVFV. The Lumenal portion of the chain corresponds to 28–610; it reads SNRLKSITSV…PHLQRCNIHD (583 aa). Over residues 86–101 the composition is skewed to polar residues; the sequence is LSNSSDKSNDTVQSNE. The segment at 86-170 is disordered; that stretch reads LSNSSDKSND…KNTRVQLERA (85 aa). N-linked (GlcNAc...) asparagine glycosylation is found at asparagine 88 and asparagine 94. The segment covering 110-123 has biased composition (basic and acidic residues); that stretch reads EVDKGNNHKPKEEQ. Residues 124–135 are compositionally biased toward polar residues; that stretch reads AVSQKTTVSSNA. A compositionally biased stretch (basic and acidic residues) spans 139–170; the sequence is ISARDIQLNHKTEFRPPSSKSEKNTRVQLERA. Asparagine 196, asparagine 338, asparagine 401, and asparagine 475 each carry an N-linked (GlcNAc...) asparagine glycan.

Belongs to the glycosyltransferase 8 family. As to expression, expressed in roots, inflorescences, siliques, leaves and stems.

The protein localises to the golgi apparatus membrane. It participates in glycan metabolism; pectin biosynthesis. Its function is as follows. May be involved in pectin and/or xylans biosynthesis in cell walls. This Arabidopsis thaliana (Mouse-ear cress) protein is Probable galacturonosyltransferase 5 (GAUT5).